Reading from the N-terminus, the 121-residue chain is Large ribosomal subunit protein bL12 (121 aa).

This sequence belongs to the bacterial ribosomal protein bL12 family. As to quaternary structure, homodimer. Part of the ribosomal stalk of the 50S ribosomal subunit. Forms a multimeric L10(L12)X complex, where L10 forms an elongated spine to which 2 to 4 L12 dimers bind in a sequential fashion. Binds GTP-bound translation factors.

Its function is as follows. Forms part of the ribosomal stalk which helps the ribosome interact with GTP-bound translation factors. Is thus essential for accurate translation. The sequence is that of Large ribosomal subunit protein bL12 from Vibrio cholerae serotype O1 (strain ATCC 39541 / Classical Ogawa 395 / O395).